The sequence spans 315 residues: Glutamyl-Q tRNA(Asp) synthetase (315 aa).

L-glutamate is bound by residues 23–27 and glutamate 59; that span reads RFAPS. The short motif at 26–36 is the 'HIGH' region element; sequence PSPTGPLHIGS. Zn(2+) is bound by residues cysteine 115, cysteine 117, tyrosine 142, and cysteine 146. Tyrosine 202 and arginine 220 together coordinate L-glutamate. A 'KMSKS' region motif is present at residues 258-262; it reads KLSKQ. Lysine 261 is an ATP binding site.

It belongs to the class-I aminoacyl-tRNA synthetase family. GluQ subfamily. Zn(2+) serves as cofactor.

Catalyzes the tRNA-independent activation of glutamate in presence of ATP and the subsequent transfer of glutamate onto a tRNA(Asp). Glutamate is transferred on the 2-amino-5-(4,5-dihydroxy-2-cyclopenten-1-yl) moiety of the queuosine in the wobble position of the QUC anticodon. The sequence is that of Glutamyl-Q tRNA(Asp) synthetase from Ralstonia nicotianae (strain ATCC BAA-1114 / GMI1000) (Ralstonia solanacearum).